The chain runs to 239 residues: Carboxy-S-adenosyl-L-methionine synthase (239 aa).

S-adenosyl-L-methionine contacts are provided by residues Y35, 64–66, 88–89, and R195; these read GCS and DN.

This sequence belongs to the class I-like SAM-binding methyltransferase superfamily. Cx-SAM synthase family. In terms of assembly, homodimer.

The catalysed reaction is prephenate + S-adenosyl-L-methionine = carboxy-S-adenosyl-L-methionine + 3-phenylpyruvate + H2O. Functionally, catalyzes the conversion of S-adenosyl-L-methionine (SAM) to carboxy-S-adenosyl-L-methionine (Cx-SAM). The sequence is that of Carboxy-S-adenosyl-L-methionine synthase from Helicobacter pylori (strain G27).